The chain runs to 180 residues: Large ribosomal subunit protein uL5 (180 aa).

It belongs to the universal ribosomal protein uL5 family. Part of the 50S ribosomal subunit; part of the 5S rRNA/L5/L18/L25 subcomplex. Contacts the 5S rRNA and the P site tRNA. Forms a bridge to the 30S subunit in the 70S ribosome.

Its function is as follows. This is one of the proteins that bind and probably mediate the attachment of the 5S RNA into the large ribosomal subunit, where it forms part of the central protuberance. In the 70S ribosome it contacts protein S13 of the 30S subunit (bridge B1b), connecting the 2 subunits; this bridge is implicated in subunit movement. Contacts the P site tRNA; the 5S rRNA and some of its associated proteins might help stabilize positioning of ribosome-bound tRNAs. The sequence is that of Large ribosomal subunit protein uL5 from Symbiobacterium thermophilum (strain DSM 24528 / JCM 14929 / IAM 14863 / T).